A 67-amino-acid chain; its full sequence is Metallothionein-B (67 aa).

Belongs to the metallothionein superfamily. Type 4 family.

Its function is as follows. Metallothioneins have a high content of cysteine residues that bind various heavy metals. This is Metallothionein-B from Sphaerechinus granularis (Purple sea urchin).